Consider the following 956-residue polypeptide: DNA replication helicase (956 aa).

120–127 (GTAGAGKT) serves as a coordination point for ATP. The disordered stretch occupies residues 658–694 (PINNHVDADSSQGGQSVPVSQRMEHGQEETHDIPCLS). The segment covering 667-678 (SSQGGQSVPVSQ) has biased composition (low complexity). The segment covering 679–694 (RMEHGQEETHDIPCLS) has biased composition (basic and acidic residues).

Belongs to the herpesviridae helicase family. As to quaternary structure, associates with the primase and the primase-associated factor to form the helicase-primase complex.

The protein localises to the host nucleus. Functionally, component of the helicase/primase complex. Unwinds the DNA at the replication forks and generates single-stranded DNA for both leading and lagging strand synthesis. The primase synthesizes short RNA primers on the lagging strand that the polymerase elongates using dNTPs. Possesses helicase-like motifs and therefore may act as the helicase subunit of the complex. The protein is DNA replication helicase of Human cytomegalovirus (strain AD169) (HHV-5).